A 507-amino-acid polypeptide reads, in one-letter code: ATP synthase subunit alpha, chloroplastic (507 aa).

170-177 (GDRQTGKT) is a binding site for ATP.

The protein belongs to the ATPase alpha/beta chains family. F-type ATPases have 2 components, CF(1) - the catalytic core - and CF(0) - the membrane proton channel. CF(1) has five subunits: alpha(3), beta(3), gamma(1), delta(1), epsilon(1). CF(0) has four main subunits: a, b, b' and c.

The protein resides in the plastid. It localises to the chloroplast thylakoid membrane. It carries out the reaction ATP + H2O + 4 H(+)(in) = ADP + phosphate + 5 H(+)(out). In terms of biological role, produces ATP from ADP in the presence of a proton gradient across the membrane. The alpha chain is a regulatory subunit. The polypeptide is ATP synthase subunit alpha, chloroplastic (Vitis vinifera (Grape)).